We begin with the raw amino-acid sequence, 135 residues long: NAD(P)H-quinone oxidoreductase subunit 3 (135 aa).

The next 3 helical transmembrane spans lie at 15–35 (IVFFLSGYEYFLGFLMISSLV), 79–99 (MFALVFVIFDVETVFLYPWAV), and 104–124 (LGLLAFIEALIFIAILVVALV).

It belongs to the complex I subunit 3 family. NDH-1 can be composed of about 15 different subunits; different subcomplexes with different compositions have been identified which probably have different functions.

It is found in the cellular thylakoid membrane. The enzyme catalyses a plastoquinone + NADH + (n+1) H(+)(in) = a plastoquinol + NAD(+) + n H(+)(out). It carries out the reaction a plastoquinone + NADPH + (n+1) H(+)(in) = a plastoquinol + NADP(+) + n H(+)(out). Its function is as follows. NDH-1 shuttles electrons from an unknown electron donor, via FMN and iron-sulfur (Fe-S) centers, to quinones in the respiratory and/or the photosynthetic chain. The immediate electron acceptor for the enzyme in this species is believed to be plastoquinone. Couples the redox reaction to proton translocation, and thus conserves the redox energy in a proton gradient. Cyanobacterial NDH-1 also plays a role in inorganic carbon-concentration. The sequence is that of NAD(P)H-quinone oxidoreductase subunit 3 from Trichodesmium erythraeum (strain IMS101).